Consider the following 144-residue polypeptide: MKLWLFACLVACFVGAWMPVVHAQGAFEDCCLGYQHRIKWNVLRHARNYHQQEVSGSCNLRAVRFYFRQKVVCGNPEDMNVKRAMRILTARKRLVHWKSASDSQTERKKSNHMKSKVENPNSTSVRSATLGHPRMVMMPRKTNN.

Positions 1–23 (MKLWLFACLVACFVGAWMPVVHA) are cleaved as a signal peptide. 2 disulfide bridges follow: Cys-30–Cys-58 and Cys-31–Cys-73. Residues 98-144 (KSASDSQTERKKSNHMKSKVENPNSTSVRSATLGHPRMVMMPRKTNN) are disordered. Polar residues predominate over residues 118-127 (ENPNSTSVRS).

Belongs to the intercrine beta (chemokine CC) family. Specifically expressed by thymic dendritic cells. High levels in thymus and small intestine.

Its subcellular location is the secreted. In terms of biological role, potentially involved in T-cell development. Recombinant protein shows chemotactic activity on thymocytes, macrophages, THP-1 cells, and dendritics cells but is inactive on peripheral blood lymphocytes and neutrophils. Binds to CCR9. Binds to atypical chemokine receptor ACKR4 and mediates the recruitment of beta-arrestin (ARRB1/2) to ACKR4. The protein is C-C motif chemokine 25 (Ccl25) of Mus musculus (Mouse).